A 357-amino-acid polypeptide reads, in one-letter code: Arginine kinase (357 aa).

N-acetylalanine is present on alanine 2. Residues 9–91 (KLEEGFKKLE…FDPIIEDYHK (83 aa)) form the Phosphagen kinase N-terminal domain. L-arginine is bound at residue 64 to 68 (GVGVY). One can recognise a Phosphagen kinase C-terminal domain in the interval 119–356 (FVISTRVRCG…LELIKIEKEM (238 aa)). ATP contacts are provided by residues 122–126 (STRVR) and histidine 185. Glutamate 225 provides a ligand contact to L-arginine. Arginine 229 serves as a coordination point for ATP. Residue cysteine 271 coordinates L-arginine. Residues 280 to 284 (RASVH) and 309 to 314 (RGTRGE) contribute to the ATP site. Glutamate 314 is a binding site for L-arginine.

Belongs to the ATP:guanido phosphotransferase family.

It carries out the reaction L-arginine + ATP = N(omega)-phospho-L-arginine + ADP + H(+). In Carcinus maenas (Common shore crab), this protein is Arginine kinase.